Consider the following 287-residue polypeptide: Phosphoribosylaminoimidazole-succinocarboxamide synthase (287 aa).

It belongs to the SAICAR synthetase family.

The catalysed reaction is 5-amino-1-(5-phospho-D-ribosyl)imidazole-4-carboxylate + L-aspartate + ATP = (2S)-2-[5-amino-1-(5-phospho-beta-D-ribosyl)imidazole-4-carboxamido]succinate + ADP + phosphate + 2 H(+). It functions in the pathway purine metabolism; IMP biosynthesis via de novo pathway; 5-amino-1-(5-phospho-D-ribosyl)imidazole-4-carboxamide from 5-amino-1-(5-phospho-D-ribosyl)imidazole-4-carboxylate: step 1/2. The polypeptide is Phosphoribosylaminoimidazole-succinocarboxamide synthase (Neisseria meningitidis serogroup B (strain ATCC BAA-335 / MC58)).